The chain runs to 481 residues: UDP-glycosyltransferase 85C2 (481 aa).

The Proton acceptor role is filled by histidine 23. Histidine 23 is an an anthocyanidin binding site. The active-site Charge relay is the aspartate 120. Threonine 143, glutamine 362, histidine 377, tryptophan 380, serine 382, glutamate 385, aspartate 401, and glutamine 402 together coordinate UDP-alpha-D-glucose.

Belongs to the UDP-glycosyltransferase family.

The catalysed reaction is steviol + UDP-alpha-D-glucose = steviolmonoside + UDP + H(+). It catalyses the reaction steviolmonoside + UDP-alpha-D-glucose = rubusoside + UDP. Its function is as follows. Involved in the biosynthesis of steviol glycosides in leaves. Converts steviol to the mono-glycoside steviolmonoside. Converts the mono-glycoside steviolmonoside to the bi-glycoside rubusoside. This Stevia rebaudiana (Stevia) protein is UDP-glycosyltransferase 85C2.